The primary structure comprises 239 residues: Bradykinin-potentiating and C-type natriuretic peptides (239 aa).

Positions Met1 to Gly23 are cleaved as a signal peptide. 2 propeptides span residues Lys24–Gly33 and Leu43–Ser49. Gln50 is subject to Pyrrolidone carboxylic acid. Residues Val62 to Val64 constitute a propeptide that is removed on maturation. Gln65 is subject to Pyrrolidone carboxylic acid. Positions Leu76–Ser82 are excised as a propeptide. Pyrrolidone carboxylic acid is present on Gln83. A propeptide spanning residues Leu95 to Val97 is cleaved from the precursor. Position 98 is a pyrrolidone carboxylic acid (Gln98). Propeptides lie at residues Leu109–Asp136 and Gly148–Lys217. Residues Glu132 to Gly205 are disordered. A compositionally biased stretch (low complexity) spans Ser161–Ser171. Positions Pro173–Gln183 are enriched in basic and acidic residues. Residues Cys223 and Cys239 are joined by a disulfide bond.

This sequence in the N-terminal section; belongs to the bradykinin-potentiating peptide family. It in the central section; belongs to the bradykinin inhibitor peptide family. In the C-terminal section; belongs to the natriuretic peptide family. In terms of tissue distribution, expressed by the venom gland.

It is found in the secreted. Its function is as follows. Bradykinin-potentiating peptides both inhibit the activity of the angiotensin-converting enzyme (ACE) and enhances the action of bradykinin by inhibiting the peptidases that inactivate it. They act as indirect hypotensive agent. Functionally, inhibits angiotensin-converting enzyme (ACE) activity (IC(50)=4.25 uM), preventing the release of angiotensin and thus indirectly contributing to hypotension. In vivo, induce hypotensive response in both normotensive and hypertensive rats. Antagonizes the vasodilatory actions of bradykinin at the B2 bradykinin receptor (BDKRB2). In terms of biological role, has a vasorelaxant activity in rat aortic strips and a diuretic potency in anesthetized rats. May act by activating natriuretic receptors (NPR1 and/or NPR2). This Lachesis muta muta (Bushmaster) protein is Bradykinin-potentiating and C-type natriuretic peptides.